A 473-amino-acid chain; its full sequence is Deoxyribodipyrimidine photo-lyase (473 aa).

One can recognise a Photolyase/cryptochrome alpha/beta domain in the interval 2–134; sequence PTHLVWFRRD…ICEGFDDSVI (133 aa). 2 residues coordinate (6R)-5,10-methylene-5,6,7,8-tetrahydrofolate: Asn109 and Glu110. Tyr224 is an FAD binding site. Arg228 serves as a coordination point for DNA. An FAD-binding site is contributed by 236–240; that stretch reads TSRLS. 2 interaction with DNA regions span residues 276-283 and 343-344; these read ELIWREFY and NR. 374–376 provides a ligand contact to FAD; the sequence is DGD. Gln406 contributes to the DNA binding site.

It belongs to the DNA photolyase class-1 family. Monomer. The cofactor is FAD. It depends on (6R)-5,10-methylene-5,6,7,8-tetrahydrofolate as a cofactor.

It carries out the reaction cyclobutadipyrimidine (in DNA) = 2 pyrimidine residues (in DNA).. Its function is as follows. Involved in repair of UV radiation-induced DNA damage. Catalyzes the light-dependent monomerization (300-600 nm) of cyclobutyl pyrimidine dimers (in cis-syn configuration), which are formed between adjacent bases on the same DNA strand upon exposure to ultraviolet radiation. This Salmonella typhimurium (strain LT2 / SGSC1412 / ATCC 700720) protein is Deoxyribodipyrimidine photo-lyase (phrB).